The following is a 217-amino-acid chain: Small ribosomal subunit protein uS3 (217 aa).

In terms of domain architecture, KH type-2 spans 38-106 (IRQLIQTKLA…QVHINIVEIK (69 aa)).

The protein belongs to the universal ribosomal protein uS3 family. Part of the 30S ribosomal subunit. Forms a tight complex with proteins S10 and S14.

Functionally, binds the lower part of the 30S subunit head. Binds mRNA in the 70S ribosome, positioning it for translation. The sequence is that of Small ribosomal subunit protein uS3 from Lactococcus lactis subsp. lactis (strain IL1403) (Streptococcus lactis).